The sequence spans 195 residues: MKVNPNEIELLISAVKPEQYPETGLSEVGLSGRSNVGKSTFINSMIGRKNMARTSQQPGKTQTLNFYNIDNQLVFVDVPGYGYAKVSKKQREAFGKMIEKYISQREELKLVIQLVDLRHNPTEDDILMYNYLKYYEIPTFVVATKEDKIAKGKVQKHLANIQQKLEMEPEDEIISYSSVKNNKQQQIWNVIEKYL.

Residues G24 to L195 form the EngB-type G domain. GTP-binding positions include G32–S39, G59–T63, D77–G80, T144–D147, and Y176–S178. Positions 39 and 61 each coordinate Mg(2+).

Belongs to the TRAFAC class TrmE-Era-EngA-EngB-Septin-like GTPase superfamily. EngB GTPase family. It depends on Mg(2+) as a cofactor.

Necessary for normal cell division and for the maintenance of normal septation. This Staphylococcus saprophyticus subsp. saprophyticus (strain ATCC 15305 / DSM 20229 / NCIMB 8711 / NCTC 7292 / S-41) protein is Probable GTP-binding protein EngB.